Reading from the N-terminus, the 526-residue chain is Berberine bridge enzyme-like 11 (526 aa).

The signal sequence occupies residues 1 to 21; that stretch reads MEKLLIICMLLISVLVATSQS. Cys31 and Cys94 are disulfide-bonded. N-linked (GlcNAc...) asparagine glycosylation is found at Asn52, Asn136, Asn273, and Asn482. Residues 72-247 form the FAD-binding PCMH-type domain; the sequence is TTPKPIAIIT…MGYKIRLVPV (176 aa). Residues 109–171 constitute a cross-link (6-(S-cysteinyl)-8alpha-(pros-histidyl)-FAD (His-Cys)); the sequence is HDFEGLSYTS…NVLGFPAGLC (63 aa).

This sequence belongs to the oxygen-dependent FAD-linked oxidoreductase family. FAD is required as a cofactor. In terms of processing, the FAD cofactor is bound via a bicovalent 6-S-cysteinyl, 8alpha-N1-histidyl FAD linkage.

It localises to the secreted. The protein localises to the cell wall. The chain is Berberine bridge enzyme-like 11 from Arabidopsis thaliana (Mouse-ear cress).